Consider the following 323-residue polypeptide: Aldo-keto reductase family 1 member C18 (323 aa).

Residues 20 to 24 (GFGTY) and Asp-50 each bind NADP(+). The active-site Proton donor is the Tyr-55. His-117 contributes to the substrate binding site. NADP(+) is bound by residues 166–167 (SN), Gln-190, 216–221 (YGALGT), and 270–280 (KSFNEERIREN).

Belongs to the aldo/keto reductase family. Monomer.

Its subcellular location is the cytoplasm. The catalysed reaction is (17R,20S)-17,20-dihydroxypregn-4-en-3-one + NADP(+) = 17alpha-hydroxyprogesterone + NADPH + H(+). It carries out the reaction (17R,20S)-17,20-dihydroxypregn-4-en-3-one + NAD(+) = 17alpha-hydroxyprogesterone + NADH + H(+). Catalyzes the conversion of progesterone into 20-alpha-dihydroprogesterone (20 alpha-OHP). The polypeptide is Aldo-keto reductase family 1 member C18 (Akr1c18) (Mus musculus (Mouse)).